A 265-amino-acid polypeptide reads, in one-letter code: Ribosomal RNA small subunit methyltransferase A (265 aa).

6 residues coordinate S-adenosyl-L-methionine: histidine 13, leucine 15, glycine 40, glutamate 61, aspartate 85, and asparagine 103.

This sequence belongs to the class I-like SAM-binding methyltransferase superfamily. rRNA adenine N(6)-methyltransferase family. RsmA subfamily.

The protein localises to the cytoplasm. It catalyses the reaction adenosine(1518)/adenosine(1519) in 16S rRNA + 4 S-adenosyl-L-methionine = N(6)-dimethyladenosine(1518)/N(6)-dimethyladenosine(1519) in 16S rRNA + 4 S-adenosyl-L-homocysteine + 4 H(+). In terms of biological role, specifically dimethylates two adjacent adenosines (A1518 and A1519) in the loop of a conserved hairpin near the 3'-end of 16S rRNA in the 30S particle. May play a critical role in biogenesis of 30S subunits. This is Ribosomal RNA small subunit methyltransferase A from Bordetella pertussis (strain Tohama I / ATCC BAA-589 / NCTC 13251).